We begin with the raw amino-acid sequence, 337 residues long: 1-aminocyclopropane-1-carboxylate deaminase (337 aa).

N6-(pyridoxal phosphate)lysine is present on Lys-50. Ser-77 acts as the Nucleophile in catalysis.

This sequence belongs to the ACC deaminase/D-cysteine desulfhydrase family. As to quaternary structure, homotrimer. It depends on pyridoxal 5'-phosphate as a cofactor.

It carries out the reaction 1-aminocyclopropane-1-carboxylate + H2O = 2-oxobutanoate + NH4(+). Its function is as follows. Catalyzes a cyclopropane ring-opening reaction, the irreversible conversion of 1-aminocyclopropane-1-carboxylate (ACC) to ammonia and alpha-ketobutyrate. Allows growth on ACC as a nitrogen source. This Rhizobium radiobacter (Agrobacterium tumefaciens) protein is 1-aminocyclopropane-1-carboxylate deaminase.